Here is a 236-residue protein sequence, read N- to C-terminus: Leucyl/phenylalanyl-tRNA--protein transferase (236 aa).

Belongs to the L/F-transferase family.

It localises to the cytoplasm. The catalysed reaction is N-terminal L-lysyl-[protein] + L-leucyl-tRNA(Leu) = N-terminal L-leucyl-L-lysyl-[protein] + tRNA(Leu) + H(+). It catalyses the reaction N-terminal L-arginyl-[protein] + L-leucyl-tRNA(Leu) = N-terminal L-leucyl-L-arginyl-[protein] + tRNA(Leu) + H(+). It carries out the reaction L-phenylalanyl-tRNA(Phe) + an N-terminal L-alpha-aminoacyl-[protein] = an N-terminal L-phenylalanyl-L-alpha-aminoacyl-[protein] + tRNA(Phe). In terms of biological role, functions in the N-end rule pathway of protein degradation where it conjugates Leu, Phe and, less efficiently, Met from aminoacyl-tRNAs to the N-termini of proteins containing an N-terminal arginine or lysine. In Vibrio campbellii (strain ATCC BAA-1116), this protein is Leucyl/phenylalanyl-tRNA--protein transferase.